A 312-amino-acid chain; its full sequence is Glyoxylate/hydroxypyruvate reductase A (312 aa).

R227 is an active-site residue. H275 serves as the catalytic Proton donor.

It belongs to the D-isomer specific 2-hydroxyacid dehydrogenase family. GhrA subfamily.

The protein resides in the cytoplasm. It catalyses the reaction glycolate + NADP(+) = glyoxylate + NADPH + H(+). It carries out the reaction (R)-glycerate + NAD(+) = 3-hydroxypyruvate + NADH + H(+). The catalysed reaction is (R)-glycerate + NADP(+) = 3-hydroxypyruvate + NADPH + H(+). In terms of biological role, catalyzes the NADPH-dependent reduction of glyoxylate and hydroxypyruvate into glycolate and glycerate, respectively. The protein is Glyoxylate/hydroxypyruvate reductase A of Escherichia coli O157:H7.